Consider the following 284-residue polypeptide: Acetyl-coenzyme A carboxylase carboxyl transferase subunit beta (284 aa).

The CoA carboxyltransferase N-terminal domain maps to 31–284; sequence FWTYCKGCDS…LYQILAMHKK (254 aa). Residues Cys-35, Cys-38, Cys-54, and Cys-57 each coordinate Zn(2+). The C4-type zinc-finger motif lies at 35–57; that stretch reads CKGCDSHVFRKDIEENSFVCPKC.

Belongs to the AccD/PCCB family. Acetyl-CoA carboxylase is a heterohexamer composed of biotin carboxyl carrier protein (AccB), biotin carboxylase (AccC) and two subunits each of ACCase subunit alpha (AccA) and ACCase subunit beta (AccD). Requires Zn(2+) as cofactor.

The protein localises to the cytoplasm. The catalysed reaction is N(6)-carboxybiotinyl-L-lysyl-[protein] + acetyl-CoA = N(6)-biotinyl-L-lysyl-[protein] + malonyl-CoA. Its pathway is lipid metabolism; malonyl-CoA biosynthesis; malonyl-CoA from acetyl-CoA: step 1/1. In terms of biological role, component of the acetyl coenzyme A carboxylase (ACC) complex. Biotin carboxylase (BC) catalyzes the carboxylation of biotin on its carrier protein (BCCP) and then the CO(2) group is transferred by the transcarboxylase to acetyl-CoA to form malonyl-CoA. The sequence is that of Acetyl-coenzyme A carboxylase carboxyl transferase subunit beta from Clostridioides difficile (strain 630) (Peptoclostridium difficile).